The chain runs to 326 residues: UDP-N-acetylglucosamine transporter (326 aa).

A run of 8 helical transmembrane segments spans residues 4–24 (NLKY…VLTM), 38–58 (LSST…ILLV), 136–156 (LGVY…FVQW), 174–194 (FVGL…GVYF), 212–232 (LGFF…GELV), 244–264 (LTWI…AVIK), 269–289 (ILKG…SYFW), and 293–313 (FVPT…TFLY).

The protein belongs to the nucleotide-sugar transporter family. SLC35A subfamily. Interacts with SLC35A2; the interaction is reduced in the presence of SLC35A4. Found in a complex with SLC35A2 and SLC35A4. Interacts with MGAT4B. In terms of processing, O-Glcnacylation regulates the stability of SLC35A3 and the specific complex formation with MGAT4B.

The protein resides in the golgi apparatus membrane. The enzyme catalyses UMP(out) + UDP-N-acetyl-alpha-D-glucosamine(in) = UMP(in) + UDP-N-acetyl-alpha-D-glucosamine(out). Its function is as follows. Transports diphosphate-N-acetylglucosamine (UDP-GlcNAc) from the cytosol into the lumen of the Golgi apparatus, functioning as an antiporter that exchanges UDP-N-acetyl-alpha-D-glucosamine for UMP. May supply UDP-GlcNAc as substrate for Golgi-resident glycosyltransferases that generate highly branched, multiantennary complex N-glycans and keratan sulfate. However, the exact role of SLC35A3 still needs to be elucidated, it could be a member of a catalytically more efficient multiprotein complex rather than function independently as a single transporter. This chain is UDP-N-acetylglucosamine transporter (SLC35A3), found in Bos taurus (Bovine).